Consider the following 289-residue polypeptide: Inorganic pyrophosphatase (289 aa).

Ser-2 carries the N-acetylserine modification. Lys-57 carries the post-translational modification N6-acetyllysine. Mg(2+) contacts are provided by Asp-116, Asp-121, and Asp-153. Residue Lys-228 is modified to N6-acetyllysine. Ser-250 carries the phosphoserine modification.

It belongs to the PPase family. In terms of assembly, homodimer. Mg(2+) is required as a cofactor.

It localises to the cytoplasm. It carries out the reaction diphosphate + H2O = 2 phosphate + H(+). In Macaca fascicularis (Crab-eating macaque), this protein is Inorganic pyrophosphatase (PPA1).